Here is a 186-residue protein sequence, read N- to C-terminus: Nascent polypeptide-associated complex subunit beta (186 aa).

Residues 65–130 (GADDKKLQTT…GEEKELTELV (66 aa)) form the NAC-A/B domain. A disordered region spans residues 153–186 (QNMQKQAGAEGKKDEDEDDIPDLVEGENFESNVE). Over residues 167–186 (EDEDDIPDLVEGENFESNVE) the composition is skewed to acidic residues.

Belongs to the NAC-beta family. In terms of assembly, part of the nascent polypeptide-associated complex (NAC), consisting of egd2 and egd1. NAC associates with ribosomes via egd1.

It localises to the cytoplasm. The protein resides in the nucleus. Its function is as follows. Component of the nascent polypeptide-associated complex (NAC), a dynamic component of the ribosomal exit tunnel, protecting the emerging polypeptides from interaction with other cytoplasmic proteins to ensure appropriate nascent protein targeting. The NAC complex also promotes mitochondrial protein import by enhancing productive ribosome interactions with the outer mitochondrial membrane and blocks the inappropriate interaction of ribosomes translating non-secretory nascent polypeptides with translocation sites in the membrane of the endoplasmic reticulum. EGD1 may act as a transcription factor that exert a negative effect on the expression of several genes that are transcribed by RNA polymerase II. This is Nascent polypeptide-associated complex subunit beta (egd1) from Aspergillus fumigatus (strain ATCC MYA-4609 / CBS 101355 / FGSC A1100 / Af293) (Neosartorya fumigata).